We begin with the raw amino-acid sequence, 235 residues long: Large ribosomal subunit protein uL1 (235 aa).

This sequence belongs to the universal ribosomal protein uL1 family. As to quaternary structure, part of the 50S ribosomal subunit.

Functionally, binds directly to 23S rRNA. The L1 stalk is quite mobile in the ribosome, and is involved in E site tRNA release. Protein L1 is also a translational repressor protein, it controls the translation of the L11 operon by binding to its mRNA. This Blochmanniella floridana protein is Large ribosomal subunit protein uL1.